We begin with the raw amino-acid sequence, 244 residues long: uncharacterized protein (244 aa).

This is an uncharacterized protein from Encephalitozoon cuniculi (strain GB-M1) (Microsporidian parasite).